The chain runs to 111 residues: Large ribosomal subunit protein uL22 (111 aa).

The protein belongs to the universal ribosomal protein uL22 family. As to quaternary structure, part of the 50S ribosomal subunit.

Functionally, this protein binds specifically to 23S rRNA; its binding is stimulated by other ribosomal proteins, e.g. L4, L17, and L20. It is important during the early stages of 50S assembly. It makes multiple contacts with different domains of the 23S rRNA in the assembled 50S subunit and ribosome. Its function is as follows. The globular domain of the protein is located near the polypeptide exit tunnel on the outside of the subunit, while an extended beta-hairpin is found that lines the wall of the exit tunnel in the center of the 70S ribosome. The protein is Large ribosomal subunit protein uL22 of Xanthomonas euvesicatoria pv. vesicatoria (strain 85-10) (Xanthomonas campestris pv. vesicatoria).